Reading from the N-terminus, the 341-residue chain is 2-dehydro-3-deoxy-L-galactonate 5-dehydrogenase (341 aa).

Residue cysteine 37 participates in Zn(2+) binding. Active-site charge relay system residues include threonine 39 and histidine 42. Positions 60, 61, 90, 93, 96, and 104 each coordinate Zn(2+).

Belongs to the zinc-containing alcohol dehydrogenase family. Zn(2+) serves as cofactor.

The catalysed reaction is 2-dehydro-3-deoxy-L-galactonate + NAD(+) = 3-deoxy-D-glycero-2,5-hexodiulosonate + NADH + H(+). Functionally, involved in the degradation of 3,6-anhydro-L-galactose, which is the major monomeric sugar of red macroalgae. Catalyzes the third step of the pathway, the NAD(+)-dependent oxidation of 2-dehydro-3-deoxy-L-galactonate (L-KDGal) to 3-deoxy-D-glycero-2,5-hexodiulosonate (L-DDGal). The chain is 2-dehydro-3-deoxy-L-galactonate 5-dehydrogenase from Pseudoalteromonas atlantica (strain T6c / ATCC BAA-1087).